The following is a 419-amino-acid chain: 26S proteasome regulatory subunit 8 homolog A (419 aa).

An N-acetylalanine modification is found at Ala2. Residue 202-209 (GPPGTGKT) coordinates ATP. Lys406 participates in a covalent cross-link: Glycyl lysine isopeptide (Lys-Gly) (interchain with G-Cter in ubiquitin).

It belongs to the AAA ATPase family. Component of the 19S regulatory particle (RP/PA700) base subcomplex of the 26S proteasome. The 26S proteasome is composed of a core protease (CP), known as the 20S proteasome, capped at one or both ends by the 19S regulatory particle (RP/PA700). The RP/PA700 complex is composed of at least 17 different subunits in two subcomplexes, the base and the lid, which form the portions proximal and distal to the 20S proteolytic core, respectively.

Its subcellular location is the cytoplasm. It is found in the nucleus. Functionally, the 26S proteasome is involved in the ATP-dependent degradation of ubiquitinated proteins. The regulatory (or ATPase) complex confers ATP dependency and substrate specificity to the 26S complex. The polypeptide is 26S proteasome regulatory subunit 8 homolog A (RPT6A) (Arabidopsis thaliana (Mouse-ear cress)).